The sequence spans 1482 residues: Lysine-specific demethylase rbr-2 (1482 aa).

The tract at residues Met1–Met45 is disordered. The span at Thr11–Thr20 shows a compositional bias: low complexity. The span at Asn30–Pro41 shows a compositional bias: polar residues. Positions Ala61–Pro102 constitute a JmjN domain. Residues Val126–Lys223 form the ARID domain. Residues Tyr244 to Asn316 are disordered. Residues Met251–Glu264 are compositionally biased toward basic and acidic residues. Basic residues predominate over residues Gly277–Pro288. A PHD-type 1 zinc finger spans residues Gln322–Ser374. The 167-residue stretch at Gln471–Ser637 folds into the JmjC domain. His517, Asp520, and His605 together coordinate Fe cation. The PHD-type 2 zinc-finger motif lies at Leu1206–Gly1260. Positions Gln1361 to Gln1403 are disordered. A PHD-type 3 zinc finger spans residues Phe1416–His1471.

Belongs to the JARID1 histone demethylase family. The cofactor is Fe(2+).

The protein localises to the nucleus. The enzyme catalyses N(6),N(6),N(6)-trimethyl-L-lysyl(4)-[histone H3] + 3 2-oxoglutarate + 3 O2 = L-lysyl(4)-[histone H3] + 3 formaldehyde + 3 succinate + 3 CO2. In terms of biological role, histone demethylase that specifically demethylates 'Lys-4' of histone H3, thereby playing a central role in histone code. Does not demethylate histone H3 'Lys-9', H3 'Lys-27', H3 'Lys-36', H3 'Lys-79' or H4 'Lys-20'. Demethylates trimethylated and dimethylated but not monomethylated H3 'Lys-4'. Involved in larval development and vulva formation. The protein is Lysine-specific demethylase rbr-2 (rbr-2) of Caenorhabditis briggsae.